The sequence spans 175 residues: Apoptosis regulator Bcl-2 homolog (175 aa).

The segment at 37–42 (KLYITG) is mediates interaction with human NOP53 and localization to host nucleolus. Residues 153-173 (MTALLGSIALLATILAAVAMS) traverse the membrane as a helical segment.

The protein belongs to the Bcl-2 family. Interacts with human NOP53; may sequester ORF16 in host nucleolus and reduce its antiapoptotic activity. Interacts with ORF55.

It localises to the host membrane. It is found in the host mitochondrion. The protein localises to the host nucleus. The protein resides in the host nucleolus. In terms of biological role, plays a role in the protection against apoptosis mediated by cytotoxic cells during the immune response to acute and persistent viral infection. Contributes therefore to latency establishment. Also plays a role in the inhibition of host starvation-induced autophagy which ultimately contributes to the viral chronic infection. Also participates in the viral genome replication within host nucleus. The polypeptide is Apoptosis regulator Bcl-2 homolog (vBCL2) (Homo sapiens (Human)).